Here is a 240-residue protein sequence, read N- to C-terminus: Tumor protein p53-inducible nuclear protein 1 (240 aa).

The short motif at 25–37 (EKEDDEWILVDFI) is the LIR element.

In terms of assembly, interacts with p53/TP53 and HIPK2. Interacts with PRKCG, GABARAP, GABARAPL1, GABARAPL2, MAP1LC3A, MAP1LC3B and MAP1LC3C. Ubiquitously expressed.

It localises to the cytoplasm. Its subcellular location is the cytosol. It is found in the nucleus. The protein resides in the PML body. The protein localises to the cytoplasmic vesicle. It localises to the autophagosome. Functionally, antiproliferative and proapoptotic protein involved in cell stress response which acts as a dual regulator of transcription and autophagy. Acts as a positive regulator of autophagy. In response to cellular stress or activation of autophagy, relocates to autophagosomes where it interacts with autophagosome-associated proteins GABARAP, GABARAPL1/L2, MAP1LC3A/B/C and regulates autophagy. Acts as an antioxidant and plays a major role in p53/TP53-driven oxidative stress response. Possesses both a p53/TP53-independent intracellular reactive oxygen species (ROS) regulatory function and a p53/TP53-dependent transcription regulatory function. Positively regulates p53/TP53 and p73/TP73 and stimulates their capacity to induce apoptosis and regulate cell cycle. In response to double-strand DNA breaks, promotes p53/TP53 phosphorylation on 'Ser-46' and subsequent apoptosis. Acts as a tumor suppressor by inducing cell death by an autophagy and caspase-dependent mechanism. Can reduce cell migration by regulating the expression of SPARC. This is Tumor protein p53-inducible nuclear protein 1 (TP53INP1) from Homo sapiens (Human).